The sequence spans 544 residues: Shootin-1 (544 aa).

3 coiled-coil regions span residues 17 to 100 (SNQV…LKRK), 141 to 184 (IVIT…EKHD), and 259 to 349 (EALQ…QVSN). The disordered stretch occupies residues 343-544 (KLQQVSNPPT…TTTICTEQLS (202 aa)). Positions 352-371 (TAAPAPPPPPPPPPPPPPPS) are enriched in pro residues. The segment covering 372-383 (SSSSNPLSSLLS) has biased composition (low complexity). Over residues 397 to 412 (LVEKDSSEKSPEKDVR) the composition is skewed to basic and acidic residues. Residues 469 to 479 (SSSPGPRPPSP) show a composition bias toward pro residues. Residues 480–504 (SEKSELEKALQRRREAVKSAKNNTN) adopt a coiled-coil conformation. A compositionally biased stretch (basic and acidic residues) spans 481-497 (EKSELEKALQRRREAVK). Residues 499 to 544 (AKNNTNPSSVVDLTQIKQTRSEPGQNTGDQETLRHTTTTICTEQLS) show a composition bias toward polar residues.

The protein belongs to the shootin family.

Its subcellular location is the perikaryon. It localises to the cell projection. The protein localises to the axon. It is found in the growth cone. The protein resides in the cytoplasm. Its subcellular location is the cytoskeleton. It localises to the filopodium. The protein localises to the lamellipodium. Its function is as follows. Involved in the generation of internal asymmetric signals required for neuronal polarization and neurite outgrowth. The protein is Shootin-1 of Danio rerio (Zebrafish).